The sequence spans 1377 residues: DNA-directed RNA polymerase subunit beta (1377 aa).

This sequence belongs to the RNA polymerase beta chain family. In terms of assembly, the RNAP catalytic core consists of 2 alpha, 1 beta, 1 beta' and 1 omega subunit. When a sigma factor is associated with the core the holoenzyme is formed, which can initiate transcription.

It carries out the reaction RNA(n) + a ribonucleoside 5'-triphosphate = RNA(n+1) + diphosphate. In terms of biological role, DNA-dependent RNA polymerase catalyzes the transcription of DNA into RNA using the four ribonucleoside triphosphates as substrates. The protein is DNA-directed RNA polymerase subunit beta of Brucella suis biovar 1 (strain 1330).